The primary structure comprises 408 residues: Acetate kinase (408 aa).

Asparagine 7 serves as a coordination point for Mg(2+). Lysine 14 serves as a coordination point for ATP. Residue arginine 91 coordinates substrate. Aspartate 148 functions as the Proton donor/acceptor in the catalytic mechanism. Residues 208–212, 283–285, and 331–335 each bind ATP; these read HLGNG, DFR, and GIGEN. Glutamate 384 contacts Mg(2+).

This sequence belongs to the acetokinase family. Homodimer. The cofactor is Mg(2+). It depends on Mn(2+) as a cofactor.

The protein resides in the cytoplasm. The catalysed reaction is acetate + ATP = acetyl phosphate + ADP. Its pathway is metabolic intermediate biosynthesis; acetyl-CoA biosynthesis; acetyl-CoA from acetate: step 1/2. In terms of biological role, catalyzes the formation of acetyl phosphate from acetate and ATP. Can also catalyze the reverse reaction. In Methanosarcina mazei (Methanosarcina frisia), this protein is Acetate kinase.